A 272-amino-acid polypeptide reads, in one-letter code: Glutamate racemase (272 aa).

Residues 9–10 and 41–42 contribute to the substrate site; these read DS and YG. C73 functions as the Proton donor/acceptor in the catalytic mechanism. 74–75 is a substrate binding site; that stretch reads NT. Residue C183 is the Proton donor/acceptor of the active site. 184-185 lines the substrate pocket; it reads TH.

This sequence belongs to the aspartate/glutamate racemases family.

It carries out the reaction L-glutamate = D-glutamate. It participates in cell wall biogenesis; peptidoglycan biosynthesis. In terms of biological role, provides the (R)-glutamate required for cell wall biosynthesis. The sequence is that of Glutamate racemase from Shewanella sp. (strain MR-7).